Here is a 307-residue protein sequence, read N- to C-terminus: Ribosomal RNA small subunit methyltransferase H (307 aa).

S-adenosyl-L-methionine contacts are provided by residues 32–34 (GGH), aspartate 52, phenylalanine 78, aspartate 99, and glutamine 106.

The protein belongs to the methyltransferase superfamily. RsmH family.

The protein localises to the cytoplasm. It carries out the reaction cytidine(1402) in 16S rRNA + S-adenosyl-L-methionine = N(4)-methylcytidine(1402) in 16S rRNA + S-adenosyl-L-homocysteine + H(+). In terms of biological role, specifically methylates the N4 position of cytidine in position 1402 (C1402) of 16S rRNA. The sequence is that of Ribosomal RNA small subunit methyltransferase H from Acinetobacter baumannii (strain AB307-0294).